The following is a 181-amino-acid chain: Cytochrome b6-f complex iron-sulfur subunit (181 aa).

The tract at residues 1-35 (MAQTGNFKSPARMSSLGQGAAPASSGAVTGGKPRE) is disordered. A run of 2 helical transmembrane segments spans residues 53 to 73 (VGGV…KYII) and 114 to 134 (GGAL…VNWV). The Rieske domain maps to 85-178 (LTVGKASEVP…ARIEGDSIII (94 aa)). [2Fe-2S] cluster is bound by residues Cys124, His126, Cys142, and His145. Cysteines 129 and 144 form a disulfide.

It belongs to the Rieske iron-sulfur protein family. It depends on [2Fe-2S] cluster as a cofactor.

It localises to the cell inner membrane. It carries out the reaction 2 oxidized [plastocyanin] + a plastoquinol + 2 H(+)(in) = 2 reduced [plastocyanin] + a plastoquinone + 4 H(+)(out). Functionally, component of the green S-bacteria bc-complex which consists of the Rieske protein and cytochrome b subunit and which appears to lack a cytochrome c1-equivalent. This complex has a comparatively low redox potential. The polypeptide is Cytochrome b6-f complex iron-sulfur subunit (petC) (Chlorobaculum thiosulfatiphilum (Chlorobium limicola f.sp. thiosulfatophilum)).